The following is a 194-amino-acid chain: MSFYATIILALALSMDAFAVAVCKGATLHKPHFREALRTGFIFGIIEASTPIIGWALGLYTSQYIIQWDHWVAFGLLVILGGRMIYQSLKRGDDCICEEAPQRHGSLSLIATGIATSLDAMAIGVGLAFLQVDIVHTAMTIGMMTMIMATLGMLIGRYIGPVLGKKAEIIGGMVLIAIGFNILFEHLDLFMYAH.

6 helical membrane-spanning segments follow: residues 3–23, 40–60, 65–85, 109–129, 134–154, and 169–189; these read FYATIILALALSMDAFAVAVC, GFIFGIIEASTPIIGWALGLY, IIQWDHWVAFGLLVILGGRMI, LIATGIATSLDAMAIGVGLAF, IVHTAMTIGMMTMIMATLGML, and IIGGMVLIAIGFNILFEHLDL.

This sequence belongs to the MntP (TC 9.B.29) family.

It localises to the cell inner membrane. Its function is as follows. Probably functions as a manganese efflux pump. This chain is Putative manganese efflux pump MntP, found in Proteus mirabilis (strain HI4320).